Here is a 250-residue protein sequence, read N- to C-terminus: MYLRSRAIVIKNMDYRESDKLVTIFCEHEGKMKAVARGIKKPRSSLRACVQPFCHSSLFFSRGKGMNLITQGKLLDFYGNTREDFERSLYALYLMELLDKSLMEGVAIPRLYTSTLEVLSHLNHSGYNPMLIRYFEMNLLVNLGYSPLLDHCVLCGKKDDLKVFSLPDGGMLCRDCSYQASGAVSLSKETLALISLLGRSRLATVERVRVSNKAQKELEYFLEKYLEYYLERKFNLKKAMSILKRSMPRY.

The protein belongs to the RecO family.

Functionally, involved in DNA repair and RecF pathway recombination. In Syntrophomonas wolfei subsp. wolfei (strain DSM 2245B / Goettingen), this protein is DNA repair protein RecO.